Reading from the N-terminus, the 3008-residue chain is Genome polyprotein (3008 aa).

Ser2 carries the post-translational modification N-acetylserine; by host. The segment at 2–23 (STNPKPQRKTKRNTNRRPMDVK) is interaction with STAT1. Residues 2–58 (STNPKPQRKTKRNTNRRPMDVKFPGGGQIVGGVYLLPRRGPRLGVRATRKTSERSQP) form an interaction with EIF2AK2/PKR region. An interaction with DDX3X region spans residues 2 to 59 (STNPKPQRKTKRNTNRRPMDVKFPGGGQIVGGVYLLPRRGPRLGVRATRKTSERSQPR). The interval 2 to 75 (STNPKPQRKT…PKARRPEGRS (74 aa)) is disordered. Topologically, residues 2–168 (STNPKPQRKT…EDGINYATGN (167 aa)) are cytoplasmic. Short sequence motifs (nuclear localization signal) lie at residues 5–13 (PKPQRKTKR) and 38–43 (PRRGPR). Basic residues predominate over residues 7–16 (PQRKTKRNTN). Residues 32-47 (GGVYLLPRRGPRLGVR) are compositionally biased toward low complexity. Ser53 bears the Phosphoserine; by host mark. 2 short sequence motifs (nuclear localization signal) span residues 58–64 (PRGRRQP) and 66–71 (PKARRP). Basic residues predominate over residues 58–68 (PRGRRQPIPKA). Residues Ser99 and Ser116 each carry the phosphoserine; by host modification. The important for endoplasmic reticulum and mitochondrial localization stretch occupies residues 112 to 152 (PRGRSRNLGKVIDTLTCGFADLMGYIPLVGAPVGSVARALA). The interaction with APOA2 stretch occupies residues 122–173 (VIDTLTCGFADLMGYIPLVGAPVGSVARALAHGVRALEDGINYATGNLPGCS). The important for lipid droplets localization stretch occupies residues 164-167 (YATG). Residues 169–189 (LPGCSFSIFLLALLSCLTVPA) traverse the membrane as a helical segment. Residues 178–191 (LLALLSCLTVPASA) constitute a propeptide, ER anchor for the core protein, removed in mature form by host signal peptidase. The Lumenal portion of the chain corresponds to 190 to 358 (SAVNYRNVSG…SGGHWGVLVG (169 aa)). N-linked (GlcNAc...) asparagine; by host glycans are attached at residues Asn196, Asn209, and Asn234. The tract at residues 265-296 (MVGAATVCSGLYIGDLCGGLFLVGQMFSFRPR) is important for fusion. N-linked (GlcNAc...) asparagine; by host glycosylation is present at Asn305. A helical membrane pass occupies residues 359–379 (VAYFSMQANWAKVILVLFLFA). The Lumenal segment spans residues 380-725 (GVDAETHVSG…WEYVVLAFLL (346 aa)). Residues 385–412 (THVSGAAVGRSTAGLANLFSSGSKQNLQ) form an HVR1 region. N-linked (GlcNAc...) (high mannose) asparagine; by host glycans are attached at residues Asn417, Asn423, and Asn430. 4 disulfides stabilise this stretch: Cys429/Cys553, Cys452/Cys459, Cys487/Cys495, and Cys504/Cys509. Residue Asn448 is glycosylated (N-linked (GlcNAc...) asparagine; by host). The HVR2 stretch occupies residues 475 to 479 (ANISG). Asn476 carries an N-linked (GlcNAc...) asparagine; by host glycan. The tract at residues 481–494 (SDDRPYCWHYAPRP) is CD81-binding 1. Asn533 is a glycosylation site (N-linked (GlcNAc...) asparagine; by host). Residues 545 to 552 (PPHGAWFG) are CD81-binding 2. Asn557 is a glycosylation site (N-linked (GlcNAc...) asparagine; by host). Cystine bridges form between Cys565/Cys570, Cys581/Cys585, Cys597/Cys620, and Cys607/Cys644. N-linked (GlcNAc...) (high mannose) asparagine; by host glycans are attached at residues Asn623 and Asn645. A disulfide bond links Cys652 and Cys677. The PKR/eIF2-alpha phosphorylation homology domain (PePHD) stretch occupies residues 660–671 (VELSPLLLTTTA). A helical membrane pass occupies residues 726-746 (LADARVSAYLWMMFMVSQVEA). Over 747 to 757 (ALSNLININAA) the chain is Lumenal. The chain crosses the membrane as a helical span at residues 758 to 778 (SAAGAQGFWYAILFICIVWHV). Topologically, residues 779–782 (KGRF) are cytoplasmic. Residues 783–803 (PAAAAYAACGLWPCFLLLLML) traverse the membrane as a helical segment. Residues 804–813 (PERAYAYDQE) lie on the Lumenal side of the membrane. A helical transmembrane segment spans residues 814–834 (VAGSLGGAIVVMLTILTLSPH). Residues 835-881 (YKLWLARGLWWIQYFIARTEAVLHVYIPSFNVRGPRDSVIVLAVLVC) lie on the Cytoplasmic side of the membrane. A helical membrane pass occupies residues 882-902 (PDLVFDITKYLLAILGPLHIL). Over 903 to 928 (QASLLRIPYFVRAQALVKICSLLRGV) the chain is Lumenal. The region spanning 903-1026 (QASLLRIPYF…TETSKGWRLL (124 aa)) is the Peptidase C18 domain. Residues 904-1206 (ASLLRIPYFV…PVESLETTMR (303 aa)) form a protease NS2-3 region. Residue Cys922 is the site of S-palmitoyl cysteine; by host attachment. The chain crosses the membrane as a helical span at residues 929–949 (VYGKYFQMVVLKSRGLTGTYI). The segment at 929 to 949 (VYGKYFQMVVLKSRGLTGTYI) is interaction with host SCPS1. Topologically, residues 950–1657 (YDHLTPMSDW…CMSADLEVVT (708 aa)) are cytoplasmic. Residues His952, Glu972, and Cys993 each act as for protease NS2 activity; shared with dimeric partner in the active site. Residues 1027–1208 (APITAYAQQT…ESLETTMRSP (182 aa)) enclose the Peptidase S29 domain. Catalysis depends on charge relay system; for serine protease NS3 activity residues His1083 and Asp1107. Positions 1123 and 1125 each coordinate Zn(2+). The Charge relay system; for serine protease NS3 activity role is filled by Ser1165. Zn(2+) contacts are provided by Cys1171 and His1175. Residues 1217 to 1369 (PAVPQTYQVA…SNIEEVALPT (153 aa)) enclose the Helicase ATP-binding domain. 1230-1237 (APTGSGKS) contributes to the ATP binding site. 2 residues coordinate Mg(2+): Ser1237 and Glu1317. Positions 1316 to 1319 (DECY) match the DECH box motif. The RNA-binding stretch occupies residues 1486–1498 (QRRGRTGRGRLGT). The chain crosses the membrane as a helical span at residues 1658-1678 (STWVLVGGVLAALAAYCLSVG). Residues 1679-1690 (SVVIVGRVVLSG) form an NS3-binding region. The Cytoplasmic portion of the chain corresponds to 1679-1805 (SVVIVGRVVL…AVTSPLTTQQ (127 aa)). Residues 1806 to 1826 (TLLFNILGGWVASQIRDSDAS) traverse the membrane as a helical segment. Residues 1827 to 1828 (TA) lie on the Lumenal side of the membrane. The helical transmembrane segment at 1829 to 1849 (FVVSGLAGAAVGSVGLGKILV) threads the bilayer. Residue Asp1850 is a topological domain, cytoplasmic. A helical membrane pass occupies residues 1851–1871 (ILPGYGAGVRGAVVTFKIMSG). The Lumenal portion of the chain corresponds to 1872-1881 (EMPSTEDLVN). The chain crosses the membrane as a helical span at residues 1882–1902 (LLPAILSPGALVVEVVCPAIL). Topologically, residues 1903–1972 (RRHVGPGEGA…WINEDCSTPC (70 aa)) are cytoplasmic. Cys1972 carries the S-palmitoyl cysteine; by host lipid modification. Residues 1973–2002 (AESWLWEVWDWVLHVLSDFKTCLKAKFVPL) lie within the membrane without spanning it. At 2003–2987 (MPGIPLLSWP…YHSMSHARPR (985 aa)) the chain is on the cytoplasmic side. Zn(2+) contacts are provided by Cys2029, Cys2031, and Cys2052. The interval 2120–2208 (ELFTEVDGIR…ASSSASQLSP (89 aa)) is FKBP8-binding. Residues 2120–2329 (ELFTEVDGIR…PVPSPRRKRT (210 aa)) are transcriptional activation. Residues 2135–2139 (PKCKP) are interaction with non-structural protein 4A. Residues 2189–2435 (RLARGSRPSL…ALVTPCAAEE (247 aa)) are interaction with host SKP2. A phosphoserine; by host mark is found at Ser2194, Ser2197, Ser2201, Ser2204, and Ser2207. The segment at 2210 to 2245 (LLQATCTAPHDSPGTDLLEANLLWGSTATRVETDEK) is ISDR. The interval 2210-2272 (LLQATCTAPH…REVSVAAEIL (63 aa)) is interaction with EIF2AK2/PKR. Residues 2245-2303 (KVIILDSFESCVAEQNDDREVSVAAEILRPTKKFPPALPIWARPDYNPPLTETWKQQDY) are NS4B-binding. Residues 2296–2373 (ETWKQQDYQA…TPTETTDSGP (78 aa)) form a V3 region. The SH3-binding motif lies at 2319–2322 (PPVP). A Nuclear localization signal motif is present at residues 2324-2332 (PRRKRTVQL). Residues 2346 to 2406 (AKTFGQSEPS…DPDLTSDSWS (61 aa)) are disordered. Lys2347 participates in a covalent cross-link: Glycyl lysine isopeptide (Lys-Gly) (interchain with G-Cter in ubiquitin). At Ser2446 the chain carries Phosphoserine; by host. The RdRp catalytic domain maps to 2631–2749 (PMGFSYDTRC…IAESDGVEED (119 aa)). The Mg(2+) site is built by Asp2637, Asp2735, and Asp2736. Residues 2988–3008 (YLLLCLLILTVGVGIFLLPAR) traverse the membrane as a helical segment.

The protein belongs to the hepacivirus polyprotein family. As to quaternary structure, homooligomer. Interacts with E1 (via C-terminus). Interacts with the non-structural protein 5A. Interacts (via N-terminus) with host STAT1 (via SH2 domain); this interaction results in decreased STAT1 phosphorylation and ubiquitin-mediated proteasome-dependent STAT1 degradation, leading to decreased IFN-stimulated gene transcription. Interacts with host STAT3; this interaction constitutively activates STAT3. Interacts with host LTBR receptor. Interacts with host TNFRSF1A receptor and possibly induces apoptosis. Interacts with host HNRPK. Interacts with host YWHAE. Interacts with host UBE3A/E6AP. Interacts with host DDX3X. Interacts with host APOA2. Interacts with host RXRA protein. Interacts with host SP110 isoform 3/Sp110b; this interaction sequesters the transcriptional corepressor SP110 away from the nucleus. Interacts with host CREB3 nuclear transcription protein; this interaction triggers cell transformation. Interacts with host ACY3. Interacts with host C1QR1. Interacts with host RBM24; this interaction, which enhances the interaction of the mature core protein with 5'-UTR, may inhibit viral translation and favor replication. Interacts with host EIF2AK2/PKR; this interaction induces the autophosphorylation of EIF2AK2. Part of the viral assembly initiation complex composed of NS2, E1, E2, NS3, NS4A, NS5A and the mature core protein. In terms of assembly, forms a heterodimer with envelope glycoprotein E2. Interacts with mature core protein. Interacts with protease NS2. The heterodimer E1/E2 interacts with host CLDN1; this interaction plays a role in viral entry into host cell. Interacts with host SPSB2 (via C-terminus). Part of the viral assembly initiation complex composed of NS2, E1, E2, NS3, NS4A, NS5A and the mature core protein. Interacts with host NEURL3; this interaction prevents E1 binding to glycoprotein E2. Forms a heterodimer with envelope glycoprotein E1. Interacts with host CD81 and SCARB1 receptors; these interactions play a role in viral entry into host cell. Interacts with host EIF2AK2/PKR; this interaction inhibits EIF2AK2 and probably allows the virus to evade the innate immune response. Interacts with host CD209/DC-SIGN and CLEC4M/DC-SIGNR. Interact with host SPCS1; this interaction is essential for viral particle assembly. Interacts with protease NS2. The heterodimer E1/E2 interacts with host CLDN1; this interaction plays a role in viral entry into host cell. Part of the viral assembly initiation complex composed of NS2, E1, E2, NS3, NS4A, NS5A and the mature core protein. Interacts with host SLC3A2/4F2hc; the interaction may facilitate viral entry into host cell. Interacts with human PLSCR1. As to quaternary structure, homohexamer. Homoheptamer. Interacts with protease NS2. In terms of assembly, homodimer. Interacts with host SPCS1; this interaction is essential for viral particle assembly. Interacts with envelope glycoprotein E1. Interacts with envelope glycoprotein E2. Interacts with viroporin p7. Interacts with serine protease/helicase NS3. Part of the replication complex composed of NS2, NS3, NS4A, NS4B, NS5A and the RNA-directed RNA polymerase embedded in an ER-derived membranous web. Part of the viral assembly initiation complex composed of NS2, E1, E2, NS3, NS4A, NS5A and the mature core protein. Interacts with protease NS2. Interacts with non-structural protein 4A; this interaction stabilizes the folding of NS3 serine protease. NS3-NS4A interaction is essential for NS3 activation and allows membrane anchorage of the latter. NS3/NS4A complex also prevents phosphorylation of host IRF3, thus preventing the establishment of dsRNA induced antiviral state. Interacts with host MAVS; this interaction leads to the cleavage and inhibition of host MAVS. Interacts with host TICAM1; this interaction leads to the cleavage and inhibition of host TICAM1. Interacts with host TANK-binding kinase/TBK1; this interaction results in the inhibition of the association between TBK1 and IRF3, which leads to the inhibition of IRF3 activation. Interacts with host RBM24. Part of the replication complex composed of NS2, NS3, NS4A, NS4B, NS5A and the RNA-directed RNA polymerase embedded in an ER-derived membranous web. Part of the viral assembly initiation complex composed of NS2, E1, E2, NS3, NS4A, NS5A and the mature core protein. As to quaternary structure, interacts with NS3 serine protease; this interaction stabilizes the folding of NS3 serine protease. NS3-NS4A interaction is essential for NS3 activation and allows membrane anchorage of the latter. Interacts with non-structural protein 5A (via N-terminus). Part of the replication complex composed of NS2, NS3, NS4A, NS4B, NS5A and the RNA-directed RNA polymerase embedded in an ER-derived membranous web. Part of the viral assembly initiation complex composed of NS2, E1, E2, NS3, NS4A, NS5A and the mature core protein. In terms of assembly, homomultimer. Interacts with non-structural protein NS5A. Interacts with host PLA2G4C; this interaction likely initiates the recruitment of replication complexes to lipid droplets. Interacts with host STING; this interaction disrupts the interaction between STING and TBK1 thereby suppressing the interferon signaling. Part of the replication complex composed of NS2, NS3, NS4A, NS4B, NS5A and the RNA-directed RNA polymerase embedded in an ER-derived membranous web. Monomer. Homodimer; dimerization is required for RNA-binding. Interacts with the mature core protein. Interacts (via N-terminus) with non-structural protein 4A. Interacts with non-structural protein 4B. Interacts (via region D2) with RNA-directed RNA polymerase. Part of the viral assembly initiation complex composed of NS2, E1, E2, NS3, NS4A, NS5A and the mature core protein. Part of the replication complex composed of NS2, NS3, NS4A, NS4B, NS5A and the RNA-directed RNA polymerase embedded in an ER-derived membranous web. Interacts with host GRB2. Interacts with host BIN1. Interacts with host PIK3R1. Interacts with host SRCAP. Interacts with host FKBP8. Interacts (via C-terminus) with host VAPB (via MSP domain). Interacts with host EIF2AK2/PKR; this interaction leads to disruption of EIF2AK2 dimerization by NS5A and probably allows the virus to evade the innate immune response. Interacts (via N-terminus) with host PACSIN2 (via N-terminus); this interaction attenuates protein kinase C alpha-mediated phosphorylation of PACSIN2 by disrupting the interaction between PACSIN2 and PRKCA. Interacts (via N-terminus) with host SRC kinase (via SH2 domain). Interacts with most Src-family kinases. Interacts with host IFI27 and SKP2; promotes the ubiquitin-mediated proteasomal degradation of NS5A. Interacts with host GPS2. Interacts with host TNFRSF21; this interaction allows the modulation by the virus of JNK, p38 MAPK, STAT3, and Akt signaling pathways in a DR6-dependent manner. Interacts (via N-terminus) with host CIDEB (via N-terminus); this interaction seems to regulate the association of HCV particles with APOE. Interacts with host CHKA/Choline Kinase-alpha; CHKA bridges host PI4KA and NS5A and potentiates NS5A-stimulated PI4KA activity, which then facilitates the targeting of the ternary complex to the ER for viral replication. Interacts with host SPSB2 (via C-terminus); this interaction targets NS5A for ubiquitination and degradation. Interacts with host RAB18; this interaction may promote the association of NS5A and other replicase components with lipid droplets. Interacts (via region D2) with host PPIA/CYPA; the interaction stimulates RNA-binding ability of NS5A and is dependent on the peptidyl-prolyl cis-trans isomerase activity of PPIA/CYPA. Interacts with host TRIM14; this interaction induces the degradation of NS5A. As to quaternary structure, homooligomer. Interacts with non-structural protein 5A. Interacts with host VAPB. Interacts with host PRK2/PKN2. Interacts with host HNRNPA1 and SEPT6; these interactions facilitate viral replication. Part of the replication complex composed of NS2, NS3, NS4A, NS4B, NS5A and the RNA-directed RNA polymerase. Zn(2+) is required as a cofactor. Requires Mg(2+) as cofactor. In terms of processing, specific enzymatic cleavages in vivo yield mature proteins. The structural proteins, core, E1, E2 and p7 are produced by proteolytic processing by host signal peptidases. The core protein precursor is synthesized as a 23 kDa, which is retained in the ER membrane through the hydrophobic signal peptide. Cleavage by the signal peptidase releases the 21 kDa mature core protein. The cleavage of the core protein precursor occurs between aminoacids 176 and 188 but the exact cleavage site is not known. Some degraded forms of the core protein appear as well during the course of infection. The other proteins (p7, NS2, NS3, NS4A, NS4B, NS5A and NS5B) are cleaved by the viral proteases. Autoprocessing between NS2 and NS3 is mediated by the NS2 cysteine protease catalytic domain and regulated by the NS3 N-terminal domain. Phosphorylated by host PKC and PKA. Post-translationally, ubiquitinated; mediated by UBE3A and leading to core protein subsequent proteasomal degradation. In terms of processing, highly N-glycosylated. Palmitoylation is required for NS2/3 autoprocessing and E2 recruitment to membranes. Post-translationally, palmitoylated. This modification may play a role in its polymerization or in protein-protein interactions. In terms of processing, phosphorylated on serines in a basal form termed p56. p58 is a hyperphosphorylated form of p56. p56 and p58 coexist in the cell in roughly equivalent amounts. Hyperphosphorylation is dependent on the presence of NS4A. Host CSNK1A1/CKI-alpha or RPS6KB1 kinases may be responsible for NS5A phosphorylation. Tyrosine phosphorylation is essential for the interaction with host SRC. Post-translationally, the N-terminus is phosphorylated by host PRK2/PKN2.

The protein resides in the host endoplasmic reticulum membrane. It localises to the host mitochondrion membrane. Its subcellular location is the virion. The protein localises to the host cytoplasm. It is found in the host nucleus. The protein resides in the host lipid droplet. It localises to the virion membrane. Its subcellular location is the host mitochondrion. The protein localises to the host cell membrane. It is found in the host perinuclear region. The enzyme catalyses Hydrolysis of four peptide bonds in the viral precursor polyprotein, commonly with Asp or Glu in the P6 position, Cys or Thr in P1 and Ser or Ala in P1'.. It catalyses the reaction a ribonucleoside 5'-triphosphate + H2O = a ribonucleoside 5'-diphosphate + phosphate + H(+). The catalysed reaction is ATP + H2O = ADP + phosphate + H(+). It carries out the reaction RNA(n) + a ribonucleoside 5'-triphosphate = RNA(n+1) + diphosphate. Inhibited by the antiviral drug hexamethylene amiloride. Inhibition by amantadine appears to be genotype-dependent. Also inhibited by long-alkyl-chain iminosugar derivatives. With respect to regulation, activity is up-regulated by PRK2/PKN2-mediated phosphorylation. In terms of biological role, packages viral RNA to form a viral nucleocapsid, and promotes virion budding. Participates in the viral particle production as a result of its interaction with the non-structural protein 5A. Binds RNA and may function as a RNA chaperone to induce the RNA structural rearrangements taking place during virus replication. Modulates viral translation initiation by interacting with viral IRES and 40S ribosomal subunit. Affects various cell signaling pathways, host immunity and lipid metabolism. Prevents the establishment of cellular antiviral state by blocking the interferon-alpha/beta (IFN-alpha/beta) and IFN-gamma signaling pathways and by blocking the formation of phosphorylated STAT1 and promoting ubiquitin-mediated proteasome-dependent degradation of STAT1. Activates STAT3 leading to cellular transformation. Regulates the activity of cellular genes, including c-myc and c-fos. May repress the promoter of p53, and sequester CREB3 and SP110 isoform 3/Sp110b in the cytoplasm. Represses cell cycle negative regulating factor CDKN1A, thereby interrupting an important check point of normal cell cycle regulation. Targets transcription factors involved in the regulation of inflammatory responses and in the immune response: suppresses TNF-induced NF-kappa-B activation, and activates AP-1. Binds to dendritic cells (DCs) via C1QR1, resulting in down-regulation of T-lymphocytes proliferation. Alters lipid metabolism by interacting with hepatocellular proteins involved in lipid accumulation and storage. Induces up-regulation of FAS promoter activity, and thereby contributes to the increased triglyceride accumulation in hepatocytes (steatosis). Functionally, forms a heterodimer with envelope glycoprotein E2, which mediates virus attachment to the host cell, virion internalization through clathrin-dependent endocytosis and fusion with host membrane. Fusion with the host cell is most likely mediated by both E1 and E2, through conformational rearrangements of the heterodimer required for fusion rather than a classical class II fusion mechanism. E1/E2 heterodimer binds host apolipoproteins such as APOB and ApoE thereby forming a lipo-viro-particle (LVP). APOE associated to the LVP allows the initial virus attachment to cell surface receptors such as the heparan sulfate proteoglycans (HSPGs), syndecan-1 (SDC1), syndecan-1 (SDC2), the low-density lipoprotein receptor (LDLR) and scavenger receptor class B type I (SCARB1). The cholesterol transfer activity of SCARB1 allows E2 exposure and binding of E2 to SCARB1 and the tetraspanin CD81. E1/E2 heterodimer binding on CD81 activates the epithelial growth factor receptor (EGFR) signaling pathway. Diffusion of the complex E1-E2-EGFR-SCARB1-CD81 to the cell lateral membrane allows further interaction with Claudin 1 (CLDN1) and occludin (OCLN) to finally trigger HCV entry. Its function is as follows. Forms a heterodimer with envelope glycoprotein E1, which mediates virus attachment to the host cell, virion internalization through clathrin-dependent endocytosis and fusion with host membrane. Fusion with the host cell is most likely mediated by both E1 and E2, through conformational rearrangements of the heterodimer required for fusion rather than a classical class II fusion mechanism. The interaction between envelope glycoprotein E2 and host apolipoprotein E/APOE allows the proper assembly, maturation and infectivity of the viral particles. This interaction is probably promoted via the up-regulation of cellular autophagy by the virus. E1/E2 heterodimer binds host apolipoproteins such as APOB and APOE thereby forming a lipo-viro-particle (LVP). APOE associated to the LVP allows the initial virus attachment to cell surface receptors such as the heparan sulfate proteoglycans (HSPGs), syndecan-1 (SDC1), syndecan-1 (SDC2), the low-density lipoprotein receptor (LDLR) and scavenger receptor class B type I (SCARB1). The cholesterol transfer activity of SCARB1 allows E2 exposure and binding of E2 to SCARB1 and the tetraspanin CD81. E1/E2 heterodimer binding on CD81 activates the epithelial growth factor receptor (EGFR) signaling pathway. Diffusion of the complex E1-E2-EGFR-SCARB1-CD81 to the cell lateral membrane allows further interaction with Claudin 1 (CLDN1) and occludin (OCLN) to finally trigger HCV entry. Inhibits host EIF2AK2/PKR activation, preventing the establishment of an antiviral state. Viral ligand for CD209/DC-SIGN and CLEC4M/DC-SIGNR, which are respectively found on dendritic cells (DCs), and on liver sinusoidal endothelial cells and macrophage-like cells of lymph node sinuses. These interactions allow the capture of circulating HCV particles by these cells and subsequent facilitated transmission to permissive cells such as hepatocytes and lymphocyte subpopulations. The interaction between E2 and host amino acid transporter complex formed by SLC3A2 and SLC7A5/LAT1 may facilitate viral entry into host cell. Ion channel protein that acts as a viroporin and plays an essential role in the assembly, envelopment and secretion of viral particles. Regulates the host cell secretory pathway, which induces the intracellular retention of viral glycoproteins and favors assembly of viral particles. Creates a pore in acidic organelles and releases Ca(2+) and H(+) in the cytoplasm of infected cells, leading to a productive viral infection. High levels of cytoplasmic Ca(2+) may trigger membrane trafficking and transport of viral ER-associated proteins to viroplasms, sites of viral genome replication. This ionic imbalance induces the assembly of the inflammasome complex, which triggers the maturation of pro-IL-1beta into IL-1beta through the action of caspase-1. Targets also host mitochondria and induces mitochondrial depolarization. In addition of its role as a viroporin, acts as a lipid raft adhesion factor. In terms of biological role, cysteine protease required for the proteolytic auto-cleavage between the non-structural proteins NS2 and NS3. The N-terminus of NS3 is required for the function of NS2 protease (active region NS2-3). Promotes the initiation of viral particle assembly by mediating the interaction between structural and non-structural proteins. Functionally, displays three enzymatic activities: serine protease with a chymotrypsin-like fold, NTPase and RNA helicase. NS3 serine protease, in association with NS4A, is responsible for the cleavages of NS3-NS4A, NS4A-NS4B, NS4B-NS5A and NS5A-NS5B. The NS3/NS4A complex prevents phosphorylation of host IRF3, thus preventing the establishment of dsRNA induced antiviral state. The NS3/NS4A complex induces host amino acid transporter component SLC3A2, thus contributing to HCV propagation. NS3 RNA helicase binds to RNA and unwinds both dsDNA and dsRNA in the 3' to 5' direction, and likely resolves RNA complicated stable secondary structures in the template strand. Binds a single ATP and catalyzes the unzipping of a single base pair of dsRNA. Inhibits host antiviral proteins TBK1 and IRF3 thereby preventing the establishment of an antiviral state. Cleaves host MAVS/CARDIF thereby preventing the establishment of an antiviral state. Cleaves host TICAM1/TRIF, thereby disrupting TLR3 signaling and preventing the establishment of an antiviral state. Its function is as follows. Induces a specific membrane alteration that serves as a scaffold for the virus replication complex. This membrane alteration gives rise to the so-called ER-derived membranous web that contains the replication complex. NS4B self-interaction contributes to its function in membranous web formation. Promotes host TRIF protein degradation in a CASP8-dependent manner thereby inhibiting host TLR3-mediated interferon signaling. Disrupts the interaction between STING and TBK1 contributing to the inhibition of interferon signaling. Phosphorylated protein that is indispensable for viral replication and assembly. Both hypo- and hyperphosphorylated states are required for the viral life cycle. The hyperphosphorylated form of NS5A is an inhibitor of viral replication. Involved in RNA-binding and especially in binding to the viral genome. Zinc is essential for RNA-binding. Participates in the viral particle production as a result of its interaction with the mature viral core protein. Its interaction with host VAPB may target the viral replication complex to vesicles. Down-regulates viral IRES translation initiation. Mediates interferon resistance, presumably by interacting with and inhibiting host EIF2AK2/PKR. Prevents BIN1-induced apoptosis. Acts as a transcriptional activator of some host genes important for viral replication when localized in the nucleus. Via the interaction with host PACSIN2, modulates lipid droplet formation in order to promote virion assembly. Modulates TNFRSF21/DR6 signaling pathway for viral propagation. In terms of biological role, RNA-dependent RNA polymerase that performs primer-template recognition and RNA synthesis during viral replication. Initiates RNA transcription/replication at a flavin adenine dinucleotide (FAD), resulting in a 5'- FAD cap on viral RNAs. In this way, recognition of viral 5' RNA by host pattern recognition receptors can be bypassed, thereby evading activation of antiviral pathways. This chain is Genome polyprotein, found in Homo sapiens (Human).